The sequence spans 197 residues: Probable GTP-binding protein EngB (197 aa).

One can recognise an EngB-type G domain in the interval 22-195; that stretch reads ELPEVALAGR…WKAIYALITE (174 aa). Residues 30 to 37, 57 to 61, 75 to 78, 142 to 145, and 174 to 176 each bind GTP; these read GRSNVGKS, GKTQT, DVPG, TKLD, and FSA. Mg(2+) contacts are provided by Ser-37 and Thr-59.

Belongs to the TRAFAC class TrmE-Era-EngA-EngB-Septin-like GTPase superfamily. EngB GTPase family. Requires Mg(2+) as cofactor.

Functionally, necessary for normal cell division and for the maintenance of normal septation. The polypeptide is Probable GTP-binding protein EngB (Exiguobacterium sp. (strain ATCC BAA-1283 / AT1b)).